The chain runs to 79 residues: Dolichyl-diphosphooligosaccharide--protein glycosyltransferase subunit TMEM258 (79 aa).

Transmembrane regions (helical) follow at residues 17–37 (VFPH…AWFF) and 59–79 (VASL…GIFV).

This sequence belongs to the OST5 family. In terms of assembly, component of the oligosaccharyltransferase (OST) complex.

Its subcellular location is the membrane. It is found in the endoplasmic reticulum. The protein localises to the cytoplasm. The protein operates within protein modification; protein glycosylation. Its function is as follows. Subunit of the oligosaccharyl transferase (OST) complex that catalyzes the initial transfer of a defined glycan (Glc(3)Man(9)GlcNAc(2) in eukaryotes) from the lipid carrier dolichol-pyrophosphate to an asparagine residue within an Asn-X-Ser/Thr consensus motif in nascent polypeptide chains, the first step in protein N-glycosylation. N-glycosylation occurs cotranslationally and the complex associates with the Sec61 complex at the channel-forming translocon complex that mediates protein translocation across the endoplasmic reticulum (ER). All subunits are required for a maximal enzyme activity. The sequence is that of Dolichyl-diphosphooligosaccharide--protein glycosyltransferase subunit TMEM258 from Danio rerio (Zebrafish).